A 257-amino-acid chain; its full sequence is Na(+)-translocating NADH-quinone reductase subunit C (257 aa).

Residues 12 to 32 (LFVVIALSLVCSIIVSAAAVG) form a helical membrane-spanning segment. FMN phosphoryl threonine is present on Thr-225.

Belongs to the NqrC family. In terms of assembly, composed of six subunits; NqrA, NqrB, NqrC, NqrD, NqrE and NqrF. It depends on FMN as a cofactor.

The protein resides in the cell inner membrane. It catalyses the reaction a ubiquinone + n Na(+)(in) + NADH + H(+) = a ubiquinol + n Na(+)(out) + NAD(+). Its function is as follows. NQR complex catalyzes the reduction of ubiquinone-1 to ubiquinol by two successive reactions, coupled with the transport of Na(+) ions from the cytoplasm to the periplasm. NqrA to NqrE are probably involved in the second step, the conversion of ubisemiquinone to ubiquinol. The chain is Na(+)-translocating NADH-quinone reductase subunit C from Vibrio cholerae serotype O1 (strain ATCC 39541 / Classical Ogawa 395 / O395).